A 290-amino-acid polypeptide reads, in one-letter code: MAKRVCVGDLRKLAGSVSTPSRCILPPHARCFSVLNRPPPNYEGHIPLTVIERLGLAVGSGLGSFLDPRRADLIASFGEATAQPHFIYKLRDRMLLNPTGRRILRDRPRLTSTSLDIPRLRQLPPNTLGYVYALWLDREGVSPDTRATVQYIDDEECAYVMQRYRECHDFYHALVGLPVFREGEVALKAFEFANTGLPMTGLAVFSAFTLKKAEWRRFWDIYGPWATRNGAQSDDVINIYWEEELETDIDQLRTRLGIEKPPDLREMRKAEREAQKKDKEAKETMTRAAV.

A mitochondrion-targeting transit peptide spans 1 to 32 (MAKRVCVGDLRKLAGSVSTPSRCILPPHARCF). The Zn(2+) site is built by H168, D169, H172, and E184. Residues 260-290 (KPPDLREMRKAEREAQKKDKEAKETMTRAAV) are disordered.

The protein belongs to the COQ4 family. As to quaternary structure, component of a multi-subunit COQ enzyme complex, composed of at least COQ3, COQ4, COQ5, COQ6, COQ7 and COQ9. Zn(2+) serves as cofactor.

It localises to the mitochondrion inner membrane. The catalysed reaction is a 4-hydroxy-3-methoxy-5-(all-trans-polyprenyl)benzoate + H(+) = a 2-methoxy-6-(all-trans-polyprenyl)phenol + CO2. Its pathway is cofactor biosynthesis; ubiquinone biosynthesis. In terms of biological role, lyase that catalyzes the C1-decarboxylation of 4-hydroxy-3-methoxy-5-(all-trans-polyprenyl)benzoic acid into 2-methoxy-6-(all-trans-polyprenyl)phenol during ubiquinone biosynthesis. This Phaeosphaeria nodorum (strain SN15 / ATCC MYA-4574 / FGSC 10173) (Glume blotch fungus) protein is Ubiquinone biosynthesis protein COQ4, mitochondrial.